Consider the following 172-residue polypeptide: Ribosome maturation factor RimM (172 aa).

In terms of domain architecture, PRC barrel spans 96 to 168 (EGEFYYHQII…RVDVELMEGL (73 aa)).

Belongs to the RimM family. In terms of assembly, binds ribosomal protein uS19.

Its subcellular location is the cytoplasm. In terms of biological role, an accessory protein needed during the final step in the assembly of 30S ribosomal subunit, possibly for assembly of the head region. Essential for efficient processing of 16S rRNA. May be needed both before and after RbfA during the maturation of 16S rRNA. It has affinity for free ribosomal 30S subunits but not for 70S ribosomes. This is Ribosome maturation factor RimM from Streptococcus pyogenes serotype M3 (strain ATCC BAA-595 / MGAS315).